A 132-amino-acid polypeptide reads, in one-letter code: Agouti-signaling protein (132 aa).

The first 22 residues, 1–22 (MDVTRLLLATLLVFLCFFAAYS), serve as a signal peptide directing secretion. Asparagine 39 is a glycosylation site (N-linked (GlcNAc...) asparagine). The disordered stretch occupies residues 61 to 93 (KISRKEAEKKRSSKKEASKQKVARPRTPLSVPC). Positions 64 to 79 (RKEAEKKRSSKKEASK) are enriched in basic and acidic residues. 5 disulfide bridges follow: cysteine 93–cysteine 108, cysteine 100–cysteine 114, cysteine 107–cysteine 125, cysteine 111–cysteine 132, and cysteine 116–cysteine 123. The Agouti domain maps to 93-132 (CVSTRGSCKPPAPACCHPCASCQCRFFRSACSCRVLNVNC).

It localises to the secreted. Its function is as follows. Involved in the regulation of melanogenesis. The binding of ASP to MC1R precludes alpha-MSH initiated signaling and thus blocks production of cAMP, leading to a down-regulation of eumelanogenesis (brown/black pigment) and thus increasing synthesis of pheomelanin (yellow/red pigment). The polypeptide is Agouti-signaling protein (ASIP) (Callithrix geoffroyi (Geoffroy's marmoset)).